A 150-amino-acid polypeptide reads, in one-letter code: 3-dehydroquinate dehydratase (150 aa).

Tyr26 serves as the catalytic Proton acceptor. Residues Asn77, His83, and Asp90 each contribute to the substrate site. The active-site Proton donor is the His103. Substrate contacts are provided by residues 104-105 (LS) and Arg114.

The protein belongs to the type-II 3-dehydroquinase family. In terms of assembly, homododecamer.

The enzyme catalyses 3-dehydroquinate = 3-dehydroshikimate + H2O. It functions in the pathway metabolic intermediate biosynthesis; chorismate biosynthesis; chorismate from D-erythrose 4-phosphate and phosphoenolpyruvate: step 3/7. Catalyzes a trans-dehydration via an enolate intermediate. In Histophilus somni (strain 129Pt) (Haemophilus somnus), this protein is 3-dehydroquinate dehydratase.